We begin with the raw amino-acid sequence, 226 residues long: UPF0758 protein SAK_1186 (226 aa).

An MPN domain is found at 103–225 (QILSSEQLAR…YYSFREEADI (123 aa)). Zn(2+) contacts are provided by His174, His176, and Asp187. The JAMM motif signature appears at 174–187 (HNHPSGSPKPSESD).

It belongs to the UPF0758 family.

This is UPF0758 protein SAK_1186 from Streptococcus agalactiae serotype Ia (strain ATCC 27591 / A909 / CDC SS700).